The primary structure comprises 238 residues: Sugar fermentation stimulation protein homolog (238 aa).

This sequence belongs to the SfsA family.

This Haemophilus influenzae (strain 86-028NP) protein is Sugar fermentation stimulation protein homolog.